Here is a 466-residue protein sequence, read N- to C-terminus: MSNGTIVQCIGAVVDIQFPRDQMPKIYEALTLADEGSSFAEQGLTFEVQQQLGDGVVRTIALGSSDGLRRGMPVSRTGAPISVPVGHGTLGRIMDVLGRPIDEAGPINADEKRAIHQHAPKFDELSPSVELLETGIKVIDLVCPFAKGGKVGLFGGAGVGKTVNMMELINNIAKQHSGLSVFAGVGERTREGNDFYHEMEESNVLDKVAMVFGQMNEPPGNRLRVALTGLTMAEKFRDEGRDILFFVDNIYRYTLAGTEVSALLGRMPSAVGYQPTLAEEMGVLQERITSTKTGSITSIQAVYVPADDLTDPSPATTFQHLDSTVVLSRDIAALGIYPAVDPLDSSSRQLDPQVVGEEHYQVARGVQQTLQRYKELRDIIAILGMDELSPEDKQAVARARKIQRFLSQPFHVAEVFTGSPGKYVPLAETIRGFKMIVEGECDALPEQAFYMVGTIDEAFEKAKKLQ.

Position 155–162 (155–162 (GGAGVGKT)) interacts with ATP.

The protein belongs to the ATPase alpha/beta chains family. As to quaternary structure, F-type ATPases have 2 components, CF(1) - the catalytic core - and CF(0) - the membrane proton channel. CF(1) has five subunits: alpha(3), beta(3), gamma(1), delta(1), epsilon(1). CF(0) has three main subunits: a(1), b(2) and c(9-12). The alpha and beta chains form an alternating ring which encloses part of the gamma chain. CF(1) is attached to CF(0) by a central stalk formed by the gamma and epsilon chains, while a peripheral stalk is formed by the delta and b chains.

Its subcellular location is the cell inner membrane. The enzyme catalyses ATP + H2O + 4 H(+)(in) = ADP + phosphate + 5 H(+)(out). Produces ATP from ADP in the presence of a proton gradient across the membrane. The catalytic sites are hosted primarily by the beta subunits. The chain is ATP synthase subunit beta from Bordetella avium (strain 197N).